The primary structure comprises 652 residues: DNA ligase (652 aa).

Residues 29 to 33 (DSEYD), 78 to 79 (SL), and Glu-107 each bind NAD(+). Catalysis depends on Lys-109, which acts as the N6-AMP-lysine intermediate. Residues Arg-130, Glu-164, Lys-278, and Lys-302 each coordinate NAD(+). The Zn(2+) site is built by Cys-395, Cys-398, Cys-413, and Cys-418. The BRCT domain occupies 577 to 652 (AADAVLSGKT…IQDEAWLEQL (76 aa)).

Belongs to the NAD-dependent DNA ligase family. LigA subfamily. Requires Mg(2+) as cofactor. Mn(2+) is required as a cofactor.

It carries out the reaction NAD(+) + (deoxyribonucleotide)n-3'-hydroxyl + 5'-phospho-(deoxyribonucleotide)m = (deoxyribonucleotide)n+m + AMP + beta-nicotinamide D-nucleotide.. DNA ligase that catalyzes the formation of phosphodiester linkages between 5'-phosphoryl and 3'-hydroxyl groups in double-stranded DNA using NAD as a coenzyme and as the energy source for the reaction. It is essential for DNA replication and repair of damaged DNA. This is DNA ligase from Streptococcus gordonii (strain Challis / ATCC 35105 / BCRC 15272 / CH1 / DL1 / V288).